Reading from the N-terminus, the 298-residue chain is Ankyrin repeat domain-containing protein 29 (298 aa).

ANK repeat units follow at residues 8–38 (PLANAVFWAARKGNLALLQLLLNSGRVDVDC), 42–71 (YGTTALMVASYSGHYECVRELIMQGADINL), 75–104 (TGSTALFFASQQGHNEIVKLLFEFGASTEF), 108–137 (DGGTALCAACQFGHSRVVDTLLKNGANVHD), 141–170 (DGATALFLASQEGHVNLIRQLLSSGAKVNQ), 174–203 (DGTAPLWMAAQMGHSEVVKVLLLRGADRDA), 207–236 (DGSTALFKAAHKGHCSVMEELLKFSPSLGI), and 239–268 (NGSTALHAAVMGGSLKAVDLLLKANADPAL).

This is Ankyrin repeat domain-containing protein 29 (ankrd29) from Danio rerio (Zebrafish).